The following is a 68-amino-acid chain: Small integral membrane protein 10-like protein 3 (68 aa).

As to expression, expressed specifically in salivary glands (at protein level).

This chain is Small integral membrane protein 10-like protein 3, found in Mus musculus (Mouse).